The following is a 250-amino-acid chain: Carboxymethylproline synthase (250 aa).

60 to 64 lines the malonyl-CoA pocket; it reads AGGDF.

This sequence belongs to the enoyl-CoA hydratase/isomerase family. Homotrimer.

The catalysed reaction is (S)-1-pyrroline-5-carboxylate + malonyl-CoA + H2O + H(+) = (2S,5S)-5-carboxymethylproline + CO2 + CoA. It participates in antibiotic biosynthesis; carbapenem biosynthesis. Catalyzes the formation of (2S,5S)-carboxymethylproline (t-CMP) from malonyl-CoA and (S)-1-pyrroline-5-carboxylate, the first step in the biosynthesis of (5R)-carbapen-2-em-3-carboxylate, a beta-lactam antibiotic of the carbapenem class. Also catalyzes the independent decarboxylation of malonyl-CoA and methylmalonyl-CoA and the hydrolysis of CoA esters such as acetyl-CoA and propionyl-CoA. Catalyzes the reaction with a C2 epimeric mixture of methylmalonyl-CoA to give a 55:45 mixture of (6R)- and (6S)-epimers of 6-methyl-t-CMP, under standard incubation conditions. This is Carboxymethylproline synthase from Pectobacterium carotovorum subsp. carotovorum (Erwinia carotovora subsp. carotovora).